The chain runs to 203 residues: A-type ATP synthase subunit E (203 aa).

It belongs to the V-ATPase E subunit family. As to quaternary structure, has multiple subunits with at least A(3), B(3), C, D, E, F, H, I and proteolipid K(x).

Its subcellular location is the cell membrane. Component of the A-type ATP synthase that produces ATP from ADP in the presence of a proton gradient across the membrane. The protein is A-type ATP synthase subunit E of Thermococcus sibiricus (strain DSM 12597 / MM 739).